A 633-amino-acid chain; its full sequence is DNA mismatch repair protein MutL (633 aa).

The protein belongs to the DNA mismatch repair MutL/HexB family.

Functionally, this protein is involved in the repair of mismatches in DNA. It is required for dam-dependent methyl-directed DNA mismatch repair. May act as a 'molecular matchmaker', a protein that promotes the formation of a stable complex between two or more DNA-binding proteins in an ATP-dependent manner without itself being part of a final effector complex. The chain is DNA mismatch repair protein MutL from Pseudomonas putida (strain W619).